The primary structure comprises 300 residues: Cation-efflux pump FieF (300 aa).

A helical membrane pass occupies residues 24–44; that stretch reads LLIKIFAWWYTGSVSILAALV. Aspartate 45 and aspartate 49 together coordinate Zn(2+). A run of 2 helical transmembrane segments spans residues 82–102 and 114–134; these read AALA…LTSI and PGVG…LVTF. Residues histidine 153 and aspartate 157 each coordinate Zn(2+). 2 helical membrane-spanning segments follow: residues 156 to 176 and 178 to 198; these read SDVM…YGWH and ADAL…LRMG.

Belongs to the cation diffusion facilitator (CDF) transporter (TC 2.A.4) family. FieF subfamily. As to quaternary structure, homodimer.

The protein localises to the cell inner membrane. The catalysed reaction is Zn(2+)(in) + H(+)(out) = Zn(2+)(out) + H(+)(in). The enzyme catalyses Cd(2+)(in) + H(+)(out) = Cd(2+)(out) + H(+)(in). It carries out the reaction Fe(2+)(in) + H(+)(out) = Fe(2+)(out) + H(+)(in). Its function is as follows. Divalent metal cation transporter which exports Zn(2+), Cd(2+) and possibly Fe(2+). May be involved in zinc and iron detoxification by efflux. The protein is Cation-efflux pump FieF of Salmonella choleraesuis (strain SC-B67).